Consider the following 321-residue polypeptide: Lipoyl synthase (321 aa).

[4Fe-4S] cluster is bound by residues Cys-68, Cys-73, Cys-79, Cys-94, Cys-98, Cys-101, and Ser-308. Residues 80 to 297 form the Radical SAM core domain; the sequence is FNHGTATFMI…KELAESIGFT (218 aa).

It belongs to the radical SAM superfamily. Lipoyl synthase family. Requires [4Fe-4S] cluster as cofactor.

It is found in the cytoplasm. The catalysed reaction is [[Fe-S] cluster scaffold protein carrying a second [4Fe-4S](2+) cluster] + N(6)-octanoyl-L-lysyl-[protein] + 2 oxidized [2Fe-2S]-[ferredoxin] + 2 S-adenosyl-L-methionine + 4 H(+) = [[Fe-S] cluster scaffold protein] + N(6)-[(R)-dihydrolipoyl]-L-lysyl-[protein] + 4 Fe(3+) + 2 hydrogen sulfide + 2 5'-deoxyadenosine + 2 L-methionine + 2 reduced [2Fe-2S]-[ferredoxin]. It participates in protein modification; protein lipoylation via endogenous pathway; protein N(6)-(lipoyl)lysine from octanoyl-[acyl-carrier-protein]: step 2/2. Functionally, catalyzes the radical-mediated insertion of two sulfur atoms into the C-6 and C-8 positions of the octanoyl moiety bound to the lipoyl domains of lipoate-dependent enzymes, thereby converting the octanoylated domains into lipoylated derivatives. In Shewanella halifaxensis (strain HAW-EB4), this protein is Lipoyl synthase.